Here is a 285-residue protein sequence, read N- to C-terminus: Bifunctional protein FolD (285 aa).

NADP(+) is bound by residues 165–167 (GRS) and Ser-190.

It belongs to the tetrahydrofolate dehydrogenase/cyclohydrolase family. In terms of assembly, homodimer.

The catalysed reaction is (6R)-5,10-methylene-5,6,7,8-tetrahydrofolate + NADP(+) = (6R)-5,10-methenyltetrahydrofolate + NADPH. It carries out the reaction (6R)-5,10-methenyltetrahydrofolate + H2O = (6R)-10-formyltetrahydrofolate + H(+). It functions in the pathway one-carbon metabolism; tetrahydrofolate interconversion. Its function is as follows. Catalyzes the oxidation of 5,10-methylenetetrahydrofolate to 5,10-methenyltetrahydrofolate and then the hydrolysis of 5,10-methenyltetrahydrofolate to 10-formyltetrahydrofolate. The protein is Bifunctional protein FolD of Staphylococcus haemolyticus (strain JCSC1435).